Here is a 351-residue protein sequence, read N- to C-terminus: uncharacterized protein (351 aa).

The first 27 residues, 1–27 (MKNKKRVLIASSLSCAILLLSAATTQA), serve as a signal peptide directing secretion. The disordered stretch occupies residues 27–71 (ANSAHKDSQDQNKKEHVDKSQQKDKRNVTNKDKNSTAPDDIGKNG). Positions 30-60 (AHKDSQDQNKKEHVDKSQQKDKRNVTNKDKN) are enriched in basic and acidic residues.

This sequence belongs to the aerolysin family.

This is an uncharacterized protein from Staphylococcus aureus (strain USA300).